A 372-amino-acid chain; its full sequence is Actin-related protein 2/3 complex subunit 1B (372 aa).

WD repeat units follow at residues F6–V45, E50–T89, R94–K135, P140–R179, S242–S280, and L324–K367.

The protein belongs to the WD repeat ARPC1 family. In terms of assembly, component of the Arp2/3 complex composed of ACTR2/ARP2, ACTR3/ARP3, ARPC1B/p41-ARC, ARPC2/p34-ARC, ARPC3/p21-ARC, ARPC4/p20-ARC and ARPC5/p16-ARC.

The protein resides in the cytoplasm. Its subcellular location is the cytoskeleton. The protein localises to the nucleus. In terms of biological role, component of the Arp2/3 complex, a multiprotein complex that mediates actin polymerization upon stimulation by nucleation-promoting factor (NPF). The Arp2/3 complex mediates the formation of branched actin networks in the cytoplasm, providing the force for cell motility. In addition to its role in the cytoplasmic cytoskeleton, the Arp2/3 complex also promotes actin polymerization in the nucleus, thereby regulating gene transcription and repair of damaged DNA. The Arp2/3 complex promotes homologous recombination (HR) repair in response to DNA damage by promoting nuclear actin polymerization, leading to drive motility of double-strand breaks (DSBs). This Bos taurus (Bovine) protein is Actin-related protein 2/3 complex subunit 1B (ARPC1B).